The following is a 671-amino-acid chain: DNA ligase (671 aa).

Residues 32-36, 81-82, and E113 each bind NAD(+); these read DAEYD and SL. K115 (N6-AMP-lysine intermediate) is an active-site residue. NAD(+) is bound by residues R136, E173, K290, and K314. Residues C408, C411, C426, and C432 each coordinate Zn(2+). A BRCT domain is found at 593–671; that stretch reads EIDSPFAGKT…EAEMMRLLGE (79 aa).

It belongs to the NAD-dependent DNA ligase family. LigA subfamily. The cofactor is Mg(2+). Requires Mn(2+) as cofactor.

The catalysed reaction is NAD(+) + (deoxyribonucleotide)n-3'-hydroxyl + 5'-phospho-(deoxyribonucleotide)m = (deoxyribonucleotide)n+m + AMP + beta-nicotinamide D-nucleotide.. Its function is as follows. DNA ligase that catalyzes the formation of phosphodiester linkages between 5'-phosphoryl and 3'-hydroxyl groups in double-stranded DNA using NAD as a coenzyme and as the energy source for the reaction. It is essential for DNA replication and repair of damaged DNA. In Klebsiella pneumoniae (strain 342), this protein is DNA ligase.